Consider the following 260-residue polypeptide: Thiazole synthase (260 aa).

The Schiff-base intermediate with DXP role is filled by K96. Residues G157, 184-185 (AG), and 206-207 (NT) contribute to the 1-deoxy-D-xylulose 5-phosphate site.

This sequence belongs to the ThiG family. As to quaternary structure, homotetramer. Forms heterodimers with either ThiH or ThiS.

It localises to the cytoplasm. The enzyme catalyses [ThiS sulfur-carrier protein]-C-terminal-Gly-aminoethanethioate + 2-iminoacetate + 1-deoxy-D-xylulose 5-phosphate = [ThiS sulfur-carrier protein]-C-terminal Gly-Gly + 2-[(2R,5Z)-2-carboxy-4-methylthiazol-5(2H)-ylidene]ethyl phosphate + 2 H2O + H(+). It participates in cofactor biosynthesis; thiamine diphosphate biosynthesis. In terms of biological role, catalyzes the rearrangement of 1-deoxy-D-xylulose 5-phosphate (DXP) to produce the thiazole phosphate moiety of thiamine. Sulfur is provided by the thiocarboxylate moiety of the carrier protein ThiS. In vitro, sulfur can be provided by H(2)S. This Bradyrhizobium sp. (strain ORS 278) protein is Thiazole synthase.